The following is a 271-amino-acid chain: Ribonuclease 3 (271 aa).

Residues 5–139 (PALLELKLDY…IMAAIYLDGG (135 aa)) form the RNase III domain. E52 contacts Mg(2+). D56 is an active-site residue. The Mg(2+) site is built by D125 and E128. Residue E128 is part of the active site. Residues 172–241 (NFKSALQELA…ARGLYERLMG (70 aa)) form the DRBM domain. The interval 241–271 (GDPIVPLPDDSPGDSPDDSGDAAESGVISAT) is disordered. The segment covering 251 to 261 (SPGDSPDDSGD) has biased composition (acidic residues).

Belongs to the ribonuclease III family. As to quaternary structure, homodimer. Mg(2+) is required as a cofactor.

The protein localises to the cytoplasm. It carries out the reaction Endonucleolytic cleavage to 5'-phosphomonoester.. Its function is as follows. Digests double-stranded RNA. Involved in the processing of primary rRNA transcript to yield the immediate precursors to the large and small rRNAs (23S and 16S). Processes some mRNAs, and tRNAs when they are encoded in the rRNA operon. Processes pre-crRNA and tracrRNA of type II CRISPR loci if present in the organism. The protein is Ribonuclease 3 of Solibacter usitatus (strain Ellin6076).